Reading from the N-terminus, the 538-residue chain is SWM histone demethylase complex subunit phf2 (538 aa).

Disordered stretches follow at residues 28–47 (RFPN…NQNG), 98–150 (EIES…SSPL), and 198–222 (TKSG…RRRG). A compositionally biased stretch (basic and acidic residues) spans 98 to 111 (EIESSKNQETDAKS). The PHD-type zinc-finger motif lies at 232–288 (AMKCSVCQRLQSPPKNRIVFCDGCNTPFHQLCHEPYISDELLDSPNGEWFCDDCIRR). Over residues 367–392 (GDQYLSLNNGTESQSKTTKHSTSLPS) the composition is skewed to polar residues. Residues 367–396 (GDQYLSLNNGTESQSKTTKHSTSLPSTEPV) are disordered.

Component of the SWM histone demethylase complex composed of at least lsd1, lsd2, phf1 and phf2.

It localises to the nucleus. Component of the SWM histone demethylase complex that specifically demethylates H3K9me2, a specific tag for epigenetic transcriptional activation, thereby acting as a corepressor. Has a role in regulating heterochromatin propagation and euchromatic transcription. The protein is SWM histone demethylase complex subunit phf2 (phf2) of Schizosaccharomyces pombe (strain 972 / ATCC 24843) (Fission yeast).